Reading from the N-terminus, the 157-residue chain is Endoribonuclease YbeY (157 aa).

His-111, His-115, and His-121 together coordinate Zn(2+). The disordered stretch occupies residues 136-157 (ELLAELGHPDPYADDETDSITH). Acidic residues predominate over residues 147–157 (YADDETDSITH).

Belongs to the endoribonuclease YbeY family. Requires Zn(2+) as cofactor.

The protein resides in the cytoplasm. Single strand-specific metallo-endoribonuclease involved in late-stage 70S ribosome quality control and in maturation of the 3' terminus of the 16S rRNA. The sequence is that of Endoribonuclease YbeY from Pseudomonas putida (strain ATCC 700007 / DSM 6899 / JCM 31910 / BCRC 17059 / LMG 24140 / F1).